The primary structure comprises 297 residues: MNNQMDIGNPTRTRAILEKYGLSAKKSLGQNFLTDPNVLLNIVDAAEVSPEDDVIEVGPGIGSLTEQIAKRAHHVLAFEIDRNLMNVLDETLSPYDNITVVNQDVLKANVNEEVENHLDGKRRLKLVANLPYYITTPILKTFMASTLPIDKMVVMMQKEVAERLTAQPGDKEYGSLSVVVQYRMNTQIEFDVSSKVFVPRPKVDSAIVSLTPRAGWEVMPEDDKDFFKTVHGCFMHRRKNIWNNMQGLYGKEPEIKAKIQNVLDDLGIDPQVRPERLTVLDFIKLHNRIQIEGLKRK.

Asn31, Leu33, Gly58, Glu79, Asp104, and Asn129 together coordinate S-adenosyl-L-methionine.

Belongs to the class I-like SAM-binding methyltransferase superfamily. rRNA adenine N(6)-methyltransferase family. RsmA subfamily.

It localises to the cytoplasm. It catalyses the reaction adenosine(1518)/adenosine(1519) in 16S rRNA + 4 S-adenosyl-L-methionine = N(6)-dimethyladenosine(1518)/N(6)-dimethyladenosine(1519) in 16S rRNA + 4 S-adenosyl-L-homocysteine + 4 H(+). Specifically dimethylates two adjacent adenosines (A1518 and A1519) in the loop of a conserved hairpin near the 3'-end of 16S rRNA in the 30S particle. May play a critical role in biogenesis of 30S subunits. The protein is Ribosomal RNA small subunit methyltransferase A of Pediococcus pentosaceus (strain ATCC 25745 / CCUG 21536 / LMG 10740 / 183-1w).